The sequence spans 379 residues: Carbamoyl phosphate synthase small chain (379 aa).

Residues 1 to 188 (MSTPAILALA…ELGKGFTQPE (188 aa)) are CPSase. The L-glutamine site is built by serine 47, glycine 240, and glycine 242. In terms of domain architecture, Glutamine amidotransferase type-1 spans 192–379 (HVVAYDYGVK…FIELIEAAKK (188 aa)). Residue cysteine 269 is the Nucleophile of the active site. 5 residues coordinate L-glutamine: leucine 270, glutamine 273, asparagine 311, glycine 313, and phenylalanine 314. Residues histidine 353 and glutamate 355 contribute to the active site.

The protein belongs to the CarA family. In terms of assembly, composed of two chains; the small (or glutamine) chain promotes the hydrolysis of glutamine to ammonia, which is used by the large (or ammonia) chain to synthesize carbamoyl phosphate. Tetramer of heterodimers (alpha,beta)4.

It catalyses the reaction hydrogencarbonate + L-glutamine + 2 ATP + H2O = carbamoyl phosphate + L-glutamate + 2 ADP + phosphate + 2 H(+). The enzyme catalyses L-glutamine + H2O = L-glutamate + NH4(+). The protein operates within amino-acid biosynthesis; L-arginine biosynthesis; carbamoyl phosphate from bicarbonate: step 1/1. It participates in pyrimidine metabolism; UMP biosynthesis via de novo pathway; (S)-dihydroorotate from bicarbonate: step 1/3. Functionally, small subunit of the glutamine-dependent carbamoyl phosphate synthetase (CPSase). CPSase catalyzes the formation of carbamoyl phosphate from the ammonia moiety of glutamine, carbonate, and phosphate donated by ATP, constituting the first step of 2 biosynthetic pathways, one leading to arginine and/or urea and the other to pyrimidine nucleotides. The small subunit (glutamine amidotransferase) binds and cleaves glutamine to supply the large subunit with the substrate ammonia. The polypeptide is Carbamoyl phosphate synthase small chain (Acinetobacter baylyi (strain ATCC 33305 / BD413 / ADP1)).